We begin with the raw amino-acid sequence, 104 residues long: MKHTCPVCGFKDWLNRHMIMKAIILMKSARAAVFSSDLMSTRCSTRITHIEPSESIIAYRKNWLAEGCVIFSPECFPKHLQKANRGLRHHLIEQLKQINVHLPS.

This is an uncharacterized protein from Bacillus subtilis (strain 168).